Here is a 251-residue protein sequence, read N- to C-terminus: B3 domain-containing protein At2g24670 (251 aa).

A disordered region spans residues 48-111 (TTPSTVMESK…SSKTREPTPG (64 aa)). A compositionally biased stretch (basic and acidic residues) spans 56–70 (SKSHIHDHSLRESPT). The segment at residues 153 to 249 (VSQIVELEFL…TLYFALVPLY (97 aa)) is a DNA-binding region (TF-B3).

It localises to the nucleus. The sequence is that of B3 domain-containing protein At2g24670 from Arabidopsis thaliana (Mouse-ear cress).